The sequence spans 226 residues: Phospholipase Culp4 (226 aa).

The N-terminal stretch at 1–45 (MIPRPQPHSGRWRAGAARRLTSLVAAAFAAATLLLTPALAPPASA) is a signal peptide. Cysteines 47 and 117 form a disulfide. The active-site Nucleophile is Ser-128. Cys-191 and Cys-198 are oxidised to a cystine. Residue Asp-195 is part of the active site. The active-site Proton donor/acceptor is the His-207.

The protein belongs to the cutinase family. Homodimer.

It localises to the cell membrane. It is found in the secreted. The protein localises to the cell wall. It carries out the reaction 1,2-dihexadecanoyl-sn-glycero-3-phosphocholine + H2O = 1-hexadecanoyl-sn-glycero-3-phosphocholine + hexadecanoate + H(+). It catalyses the reaction a butanoate ester + H2O = an aliphatic alcohol + butanoate + H(+). Its activity is regulated as follows. Inhibited by high concentrations of paraoxon. Inhibited by tetrahydrolipstatin (THL), a specific lipase inhibitor. Functionally, A2-type phospholipase, which is probably involved in the degradation of macrophage membrane. Hydrolyzes dipalmitoylphosphatidylcholine. Also shows moderate esterase activity and hydrolyzes the p-nitrophenol-linked aliphatic ester pNP-butyrate (C4). Does not exhibit cutinase activity. This chain is Phospholipase Culp4, found in Mycobacterium tuberculosis (strain ATCC 25618 / H37Rv).